Reading from the N-terminus, the 613-residue chain is YTH domain-containing family protein 2 (613 aa).

Disordered regions lie at residues Met-1–Arg-43, Ser-215–Ala-234, and Ala-244–Ala-396. The localization to mRNA processing bodies (P-bodies) stretch occupies residues Ser-2–Glu-397. A compositionally biased stretch (polar residues) spans Asn-16–Asp-27. Composition is skewed to low complexity over residues Ser-218–Ala-234, Asn-295–Gly-307, and Pro-345–Pro-360. The segment at Pro-398–Lys-613 is interaction with m6A-containing mRNAs. The YTH domain maps to Gly-423–Ile-557. RNA contacts are provided by residues Lys-429–Tyr-431, Asp-435, Trp-445–Cys-446, Asn-475, Trp-499, and Trp-504. 2 stretches are compositionally biased toward basic and acidic residues: residues Glu-578–Glu-587 and Arg-604–Lys-613. A disordered region spans residues Glu-578 to Lys-613.

It belongs to the YTHDF family. YTHDF2 subfamily.

It is found in the cytoplasm. Its subcellular location is the cytosol. It localises to the P-body. The protein localises to the stress granule. The protein resides in the nucleus. Specifically recognizes and binds N6-methyladenosine (m6A)-containing RNAs, and regulates their stability. M6A is a modification present at internal sites of mRNAs and some non-coding RNAs and plays a role in mRNA stability and processing. Acts as a regulator of mRNA stability by promoting degradation of m6A-containing mRNAs. The YTHDF paralogs (ythdf1, ythdf2 and ythdf3) share m6A-containing mRNAs targets and act redundantly to mediate mRNA degradation and cellular differentiation. Plays a key role in maternal-to-zygotic transition during early embryonic development, the process during which maternally inherited mRNAs are degraded: acts by binding m6A-containing maternal mRNAs and promoting their degradation. More than one-third of maternal mRNAs can be modified by m6A. Binding to m6A-containing mRNAs results in mRNA degradation. Also involved in hematopoietic stem cells specification by binding to m6A-containing mRNAs, such as notch1a, and promote their degradation. The decreased Notch signaling following notch1a degradation promotes endothelial to hematopoietic transition. Promotes formation of phase-separated membraneless compartments, such as P-bodies or stress granules, by undergoing liquid-liquid phase separation upon binding to mRNAs containing multiple m6A-modified residues: polymethylated mRNAs act as a multivalent scaffold for the binding of YTHDF proteins, juxtaposing their disordered regions and thereby leading to phase separation. The resulting mRNA-YTHDF complexes then partition into different endogenous phase-separated membraneless compartments, such as P-bodies, stress granules or neuronal RNA granules. This is YTH domain-containing family protein 2 from Danio rerio (Zebrafish).